We begin with the raw amino-acid sequence, 1775 residues long: Atrochrysone carboxylic acid synthase (1775 aa).

The Starter acyltransferase (SAT) domain occupies 35 to 262 (LRRLQALSKD…YAKWASLPIF (228 aa)). The 434-residue stretch at 400-833 (DSKIAIVGMS…GGNTTMLLEE (434 aa)) folds into the Ketosynthase family 3 (KS3) domain. Residues Cys-573, His-708, and His-750 each act as for beta-ketoacyl synthase activity in the active site. The Malonyl-CoA:ACP transacylase (MAT) domain maps to 934–1244 (FAFTGQGAFY…ENNWNTLADS (311 aa)). Positions 1313 to 1631 (TSSIHQVLQE…RSLLPTFFSP (319 aa)) are product template (PT) domain. Residues 1317 to 1451 (HQVLQEDVTG…SAVVEYGDAN (135 aa)) form an N-terminal hotdog fold region. The 310-residue stretch at 1317–1626 (HQVLQEDVTG…FRRFPRSLLP (310 aa)) folds into the PKS/mFAS DH domain. His-1349 (proton acceptor; for dehydratase activity) is an active-site residue. The segment at 1480–1626 (AAVLPRNMAY…FRRFPRSLLP (147 aa)) is C-terminal hotdog fold. Asp-1537 serves as the catalytic Proton donor; for dehydratase activity. The segment at 1671–1697 (TAAPVPAPAPVPAKRAEPAPAAAQAAA) is disordered. Residues 1688–1697 (PAPAAAQAAA) show a composition bias toward low complexity. A Carrier domain is found at 1697 to 1774 (ATQNPTITGA…ELKTYIEETF (78 aa)). Ser-1734 is modified (O-(pantetheine 4'-phosphoryl)serine).

The enzyme catalyses holo-[ACP] + 8 malonyl-CoA + 8 H(+) = atrochrysone carboxyl-[ACP] + 8 CO2 + 8 CoA + 2 H2O. It functions in the pathway secondary metabolite biosynthesis. Functionally, non-reducing polyketide synthase; part of the gene cluster that mediates the biosynthesis of physcion, a natural anthraquinone fungicide that can prevent plant fungal infections. The pathway begins with the polyketide synthase AcPKS that condenses 8 malonyl-CoA units to synthesize atrochrysone thioester which is released from the synthase by the atrochrysone carboxyl ACP thioesterase AcTE that breaks the thioester bond and leads to free atrochrysone carboxylic acid. Spontaneous decarboxylation of atrochrysone carboxylic acid leads to the formation of atrochrysone. Then, atrochrysone undergoes spontaneous dehydration and oxidation, giving the products emodin anthrone and emodin. The O-methyltransferase AcOMT then methylates the C-6 hydroxyl of emodin to form physcion. The chain is Atrochrysone carboxylic acid synthase from Aspergillus chevalieri (Eurotium chevalieri).